Reading from the N-terminus, the 31-residue chain is M-poneritoxin-Nc3b (31 aa).

This sequence belongs to the ponericin-G family. In terms of tissue distribution, expressed by the venom gland.

It is found in the secreted. The protein resides in the target cell membrane. In terms of biological role, membrane-perturbating peptide with a few moderate activities. It is insecticidal, since it induces reversible paralysis in insects (L.cuprina) after 1 hour, but fails to kill them. It is also antiparasitic, since it moderately inhibits the larval development of the major pathogenic nematode of ruminants (H.contortus, IC(50)=23.2 uM) and reduces the motility of adult males of the other nematode B.malayi. It does not show antibacterial activity (MIC&gt;40 uM). It is not cytotoxic to HEK293 cells and does not induce hemolysis in human erythrocytes. It does not cause an increase in intracellular calcium concentration on neuronal and epithelial cell lines. In Neoponera commutata (Large hunting ant), this protein is M-poneritoxin-Nc3b.